The chain runs to 586 residues: Probable zinc metalloprotease EGY3, chloroplastic (586 aa).

The N-terminal 54 residues, 1–54, are a transit peptide targeting the chloroplast; that stretch reads MSSSSLVTSLLFSSSSSSNTATSTSSRRSFSLFSKNQYCKPSPLRRSSSLLLVR. Over residues 62-73 the composition is skewed to basic and acidic residues; the sequence is EEKAAPAAESHH. Residues 62-118 are disordered; that stretch reads EEKAAPAAESHHAGGGQDDAATASHHAVEGENGVADADGGGVKKSKEELEEEEQQEV. Positions 103–195 form a coiled coil; the sequence is VKKSKEELEE…NTFKALDLNK (93 aa). A run of 7 helical transmembrane segments spans residues 287–307, 318–338, 389–409, 427–447, 454–474, 506–526, and 550–570; these read LSAV…SGFF, VSDV…SEIA, ASAY…DGSL, PLLS…GNVL, VGVP…VTSL, VALG…WGLF, and YAWG…NGGG.

This sequence belongs to the peptidase M50B family.

Its subcellular location is the plastid. The protein resides in the chloroplast membrane. Its function is as follows. Probable membrane-associated metalloprotease that may be involved in chloroplast development. In Oryza sativa subsp. indica (Rice), this protein is Probable zinc metalloprotease EGY3, chloroplastic (EGY3).